We begin with the raw amino-acid sequence, 160 residues long: 2-C-methyl-D-erythritol 2,4-cyclodiphosphate synthase (160 aa).

A divalent metal cation-binding residues include D9 and H11. 4-CDP-2-C-methyl-D-erythritol 2-phosphate is bound by residues 9-11 (DVH) and 35-36 (HS). H43 contributes to the a divalent metal cation binding site. 4-CDP-2-C-methyl-D-erythritol 2-phosphate is bound by residues 57-59 (DIG), 62-66 (FPDTD), 133-136 (TTTE), F140, and R143.

The protein belongs to the IspF family. Homotrimer. Requires a divalent metal cation as cofactor.

The catalysed reaction is 4-CDP-2-C-methyl-D-erythritol 2-phosphate = 2-C-methyl-D-erythritol 2,4-cyclic diphosphate + CMP. The protein operates within isoprenoid biosynthesis; isopentenyl diphosphate biosynthesis via DXP pathway; isopentenyl diphosphate from 1-deoxy-D-xylulose 5-phosphate: step 4/6. Its function is as follows. Involved in the biosynthesis of isopentenyl diphosphate (IPP) and dimethylallyl diphosphate (DMAPP), two major building blocks of isoprenoid compounds. Catalyzes the conversion of 4-diphosphocytidyl-2-C-methyl-D-erythritol 2-phosphate (CDP-ME2P) to 2-C-methyl-D-erythritol 2,4-cyclodiphosphate (ME-CPP) with a corresponding release of cytidine 5-monophosphate (CMP). The polypeptide is 2-C-methyl-D-erythritol 2,4-cyclodiphosphate synthase (Haemophilus ducreyi (strain 35000HP / ATCC 700724)).